Here is an 892-residue protein sequence, read N- to C-terminus: Translation initiation factor IF-2 (892 aa).

The tract at residues 88 to 305 is disordered; sequence KKRTFVKRDP…SLQQGFQKPA (218 aa). 2 stretches are compositionally biased toward basic and acidic residues: residues 93–159 and 166–216; these read VKRD…KDKV and DMTK…EENK. The segment covering 254 to 269 has biased composition (basic residues); that stretch reads GRGRNAKAARPAKKGK. Over residues 270 to 282 the composition is skewed to basic and acidic residues; it reads HAESKADREEARA. One can recognise a tr-type G domain in the interval 391–560; it reads PRAPVVTIMG…LLQAEVLELK (170 aa). The interval 400–407 is G1; that stretch reads GHVDHGKT. 400-407 is a GTP binding site; it reads GHVDHGKT. The G2 stretch occupies residues 425–429; that stretch reads GITQH. The tract at residues 446–449 is G3; the sequence is DTPG. Residues 446-450 and 500-503 contribute to the GTP site; these read DTPGH and NKID. The G4 stretch occupies residues 500–503; the sequence is NKID. The segment at 536–538 is G5; the sequence is SAK.

The protein belongs to the TRAFAC class translation factor GTPase superfamily. Classic translation factor GTPase family. IF-2 subfamily.

Its subcellular location is the cytoplasm. In terms of biological role, one of the essential components for the initiation of protein synthesis. Protects formylmethionyl-tRNA from spontaneous hydrolysis and promotes its binding to the 30S ribosomal subunits. Also involved in the hydrolysis of GTP during the formation of the 70S ribosomal complex. This is Translation initiation factor IF-2 from Salmonella agona (strain SL483).